Here is a 94-residue protein sequence, read N- to C-terminus: MPDIRVEVVYALPERQYLRQLVLEEGSTLEQAIHASGLLALRQDIDLSVNKVGIFSRPAKLEDTLSDGDRVEIYRPLLIDPKELRRQRADRTRK.

It belongs to the UPF0125 (RnfH) family.

The chain is Protein RnfH from Sodalis glossinidius (strain morsitans).